The primary structure comprises 169 residues: Ribosome maturation factor RimM (169 aa).

The 75-residue stretch at 94-168 (DDEFYHADLI…RIVADPPEGL (75 aa)) folds into the PRC barrel domain.

The protein belongs to the RimM family. As to quaternary structure, binds ribosomal protein uS19.

The protein resides in the cytoplasm. An accessory protein needed during the final step in the assembly of 30S ribosomal subunit, possibly for assembly of the head region. Essential for efficient processing of 16S rRNA. May be needed both before and after RbfA during the maturation of 16S rRNA. It has affinity for free ribosomal 30S subunits but not for 70S ribosomes. The protein is Ribosome maturation factor RimM of Cereibacter sphaeroides (strain ATCC 17025 / ATH 2.4.3) (Rhodobacter sphaeroides).